The sequence spans 506 residues: Protein nucleotidyltransferase YdiU (506 aa).

Residues G95, G97, R98, K118, D130, G131, R181, and R188 each contribute to the ATP site. The Proton acceptor role is filled by D257. Mg(2+) is bound by residues N258 and D267. D267 is an ATP binding site. The segment at 487-506 (KHYQDAPTPDQRVKQTFCGT) is disordered.

This sequence belongs to the SELO family. It depends on Mg(2+) as a cofactor. The cofactor is Mn(2+).

The catalysed reaction is L-seryl-[protein] + ATP = 3-O-(5'-adenylyl)-L-seryl-[protein] + diphosphate. It carries out the reaction L-threonyl-[protein] + ATP = 3-O-(5'-adenylyl)-L-threonyl-[protein] + diphosphate. It catalyses the reaction L-tyrosyl-[protein] + ATP = O-(5'-adenylyl)-L-tyrosyl-[protein] + diphosphate. The enzyme catalyses L-histidyl-[protein] + UTP = N(tele)-(5'-uridylyl)-L-histidyl-[protein] + diphosphate. The catalysed reaction is L-seryl-[protein] + UTP = O-(5'-uridylyl)-L-seryl-[protein] + diphosphate. It carries out the reaction L-tyrosyl-[protein] + UTP = O-(5'-uridylyl)-L-tyrosyl-[protein] + diphosphate. Its function is as follows. Nucleotidyltransferase involved in the post-translational modification of proteins. It can catalyze the addition of adenosine monophosphate (AMP) or uridine monophosphate (UMP) to a protein, resulting in modifications known as AMPylation and UMPylation. This Shewanella denitrificans (strain OS217 / ATCC BAA-1090 / DSM 15013) protein is Protein nucleotidyltransferase YdiU.